The primary structure comprises 690 residues: Tripartite terminase subunit 3 (690 aa).

The Walker A motif motif lies at 226 to 233 (IPRRHGKT). A Walker B motif motif is present at residues 321-326 (LLFVDE). E326 acts as the For ATPase activity in catalysis. Residues D481, E555, and D667 each act as for nuclease activity in the active site.

It belongs to the herpesviridae TRM3 protein family. As to quaternary structure, interacts with the terminase subunits TRM1 and TRM2. Interacts with portal protein.

The protein localises to the host nucleus. In terms of biological role, component of the molecular motor that translocates viral genomic DNA in empty capsid during DNA packaging. Forms a tripartite terminase complex together with TRM1 and TRM2 in the host cytoplasm. Once the complex reaches the host nucleus, it interacts with the capsid portal vertex. This portal forms a ring in which genomic DNA is translocated into the capsid. TRM3 carries an RNase H-like nuclease activity that plays an important role for the cleavage of concatemeric viral DNA into unit length genomes. This chain is Tripartite terminase subunit 3, found in Homo sapiens (Human).